The sequence spans 357 residues: Sulfate/thiosulfate import ATP-binding protein CysA (357 aa).

The region spanning 3 to 237 (ITIQNLNKHF…PENAFVTEFL (235 aa)) is the ABC transporter domain. Residue 35–42 (GPSGCGKT) coordinates ATP.

This sequence belongs to the ABC transporter superfamily. Sulfate/tungstate importer (TC 3.A.1.6) family. As to quaternary structure, the complex is composed of two ATP-binding proteins (CysA), two transmembrane proteins (CysT and CysW) and a solute-binding protein (CysP).

The protein localises to the cell inner membrane. It carries out the reaction sulfate(out) + ATP + H2O = sulfate(in) + ADP + phosphate + H(+). The catalysed reaction is thiosulfate(out) + ATP + H2O = thiosulfate(in) + ADP + phosphate + H(+). Its function is as follows. Part of the ABC transporter complex CysAWTP involved in sulfate/thiosulfate import. Responsible for energy coupling to the transport system. In Neisseria meningitidis serogroup A / serotype 4A (strain DSM 15465 / Z2491), this protein is Sulfate/thiosulfate import ATP-binding protein CysA.